The chain runs to 676 residues: Envelope glycoprotein (676 aa).

A signal peptide spans Met1–Ser34. The segment at Ala35 to Pro270 is receptor-binding domain (RBD). The Extracellular segment spans residues Ala35–Leu620. Asn46 carries N-linked (GlcNAc...) asparagine; by host glycosylation. Intrachain disulfides connect Cys80/Cys132, Cys106/Cys121, Cys107/Cys117, Cys155/Cys175, and Cys167/Cys180. A Zn(2+)-binding site is contributed by His89. A Zn(2+)-binding site is contributed by Asp120. An N-linked (GlcNAc...) asparagine; by host glycan is attached at Asn202. A disulfide bridge links Cys212 with Cys218. The segment at Asn287–Gly321 is disordered. Residues Pro296 to Pro308 show a composition bias toward low complexity. The span at Ser309–Ala318 shows a compositional bias: pro residues. N-linked (GlcNAc...) asparagine; by host glycosylation occurs at Asn336. Disulfide bonds link Cys346–Cys349, Cys346–Cys573, Cys376–Cys430, Cys395–Cys407, Cys437–Cys450, and Cys565–Cys572. The CXXC signature appears at Cys346–Cys349. Asn368 and Asn375 each carry an N-linked (GlcNAc...) asparagine; by host glycan. N-linked (GlcNAc...) asparagine; by host glycans are attached at residues Asn408 and Asn444. The interval Val482–Val502 is fusion peptide. Residues Gln513 to Val547 adopt a coiled-coil conformation. Positions Leu548–Leu564 are immunosuppression. Positions Cys565–Cys573 match the CX6CC motif. A helical transmembrane segment spans residues Ile621–Ile641. The S-palmitoyl cysteine; by host moiety is linked to residue Cys640. Residues Leu642–Gln676 are Cytoplasmic-facing. The YXXL motif; contains endocytosis signal signature appears at Tyr665–Leu668.

In terms of assembly, the mature envelope protein (Env) consists of a trimer of SU-TM heterodimers attached by a labile interchain disulfide bond. Post-translationally, specific enzymatic cleavages in vivo yield mature proteins. Envelope glycoproteins are synthesized as an inactive precursor that is N-glycosylated and processed likely by host cell furin or by a furin-like protease in the Golgi to yield the mature SU and TM proteins. The cleavage site between SU and TM requires the minimal sequence [KR]-X-[KR]-R. The R-peptide is released from the C-terminus of the cytoplasmic tail of the TM protein upon particle formation as a result of proteolytic cleavage by the viral protease. Cleavage of this peptide is required for TM to become fusogenic. In terms of processing, the CXXC motif is highly conserved across a broad range of retroviral envelope proteins. It is thought to participate in the formation of a labile disulfide bond possibly with the CX6CC motif present in the transmembrane protein. Isomerization of the intersubunit disulfide bond to an SU intrachain disulfide bond is thought to occur upon receptor recognition in order to allow membrane fusion. The transmembrane protein is palmitoylated. Post-translationally, the R-peptide is palmitoylated.

It is found in the virion membrane. Its subcellular location is the host cell membrane. Its function is as follows. The surface protein (SU) attaches the virus to the host cell by binding to its receptor. This interaction triggers the refolding of the transmembrane protein (TM) and is thought to activate its fusogenic potential by unmasking its fusion peptide. Fusion occurs at the host cell plasma membrane. In terms of biological role, the transmembrane protein (TM) acts as a class I viral fusion protein. Under the current model, the protein has at least 3 conformational states: pre-fusion native state, pre-hairpin intermediate state, and post-fusion hairpin state. During viral and target cell membrane fusion, the coiled coil regions (heptad repeats) assume a trimer-of-hairpins structure, positioning the fusion peptide in close proximity to the C-terminal region of the ectodomain. The formation of this structure appears to drive apposition and subsequent fusion of viral and target cell membranes. Membranes fusion leads to delivery of the nucleocapsid into the cytoplasm. The polypeptide is Envelope glycoprotein (env) (Friend murine leukemia virus (isolate FB29) (FrMLV)).